The primary structure comprises 363 residues: Protein-glutamate methylesterase/protein-glutamine glutaminase of group 3 operon (363 aa).

A Response regulatory domain is found at 7-124 (RVLIVDDSAS…RQALLECSTR (118 aa)). A 4-aspartylphosphate modification is found at D58. Residues 166–357 (PTTERIVCIG…REIMLWYQAG (192 aa)) form the CheB-type methylesterase domain. Active-site residues include S177, H203, and D299.

Belongs to the CheB family. Phosphorylated by CheA. Phosphorylation of the N-terminal regulatory domain activates the methylesterase activity.

The protein resides in the cytoplasm. The catalysed reaction is [protein]-L-glutamate 5-O-methyl ester + H2O = L-glutamyl-[protein] + methanol + H(+). It catalyses the reaction L-glutaminyl-[protein] + H2O = L-glutamyl-[protein] + NH4(+). In terms of biological role, involved in chemotaxis. Part of a chemotaxis signal transduction system that modulates chemotaxis in response to various stimuli. Catalyzes the demethylation of specific methylglutamate residues introduced into the chemoreceptors (methyl-accepting chemotaxis proteins or MCP) by CheR. Also mediates the irreversible deamidation of specific glutamine residues to glutamic acid. The protein is Protein-glutamate methylesterase/protein-glutamine glutaminase of group 3 operon of Bradyrhizobium diazoefficiens (strain JCM 10833 / BCRC 13528 / IAM 13628 / NBRC 14792 / USDA 110).